The following is a 91-amino-acid chain: Putative regulatory protein Helmi_20580 (91 aa).

It belongs to the RemA family.

This chain is Putative regulatory protein Helmi_20580, found in Heliobacterium modesticaldum (strain ATCC 51547 / Ice1).